The sequence spans 66 residues: Type 3 secretion system chaperone YscE (66 aa).

This sequence belongs to the YscE family. As to quaternary structure, component of the heterodimeric YscE-YscG chaperone. The YscE-YscG chaperone forms a stable ternary complex with YscF/SctF.

Its subcellular location is the cytoplasm. Functionally, chaperone of the type III secretion system (T3SS), also called injectisome, which is used to inject bacterial effector proteins into eukaryotic host cells. Along with YscG, prevents premature polymerization of the YscF/SctF needle protein within the cytoplasm. Required for Yop secretion. In Yersinia enterocolitica, this protein is Type 3 secretion system chaperone YscE.